We begin with the raw amino-acid sequence, 1025 residues long: Multidrug resistance protein MdtC (1025 aa).

The next 12 helical transmembrane spans lie at 3-23 (FFALFIYRPVATILLSVAITL), 333-353 (EVEQTLIISVALVILVVFLFL), 360-380 (IIPAVVVPVSLIGTFAAMYLC), 387-407 (LSLMALTIATGFVVDDAIVVL), 431-451 (VGFTVLSMSLSLVAVFLPLLL), 463-483 (FAVTLSVAIGISLLVSLTLTP), 528-548 (LVGVVLLGTIALNIWLYISIP), 853-873 (VILIIAAIATVYIVLGILYES), 875-895 (VHPLTILSTLPSAGVGALLAL), 897-917 (LFNAPFSLIALIGIMLLIGIV), 953-973 (PIMMTTLAALFGALPLVLSGG), and 984-1004 (ITIVGGLVMSQLLTLYTTPVV).

It belongs to the resistance-nodulation-cell division (RND) (TC 2.A.6) family. MdtC subfamily. In terms of assembly, part of a tripartite efflux system composed of MdtA, MdtB and MdtC. MdtC forms a heteromultimer with MdtB.

The protein localises to the cell inner membrane. Its function is as follows. The MdtABC tripartite complex confers resistance against novobiocin and deoxycholate. The chain is Multidrug resistance protein MdtC from Escherichia coli O8 (strain IAI1).